We begin with the raw amino-acid sequence, 240 residues long: Purine nucleoside phosphorylase DeoD-type (240 aa).

His-5 provides a ligand contact to a purine D-ribonucleoside. Residues Gly-21, Arg-25, Arg-44, and 88–91 contribute to the phosphate site; that span reads RVGS. A purine D-ribonucleoside-binding positions include 181–183 and 205–206; these read EME and SD. The active-site Proton donor is the Asp-206.

Belongs to the PNP/UDP phosphorylase family. Homohexamer; trimer of homodimers.

The catalysed reaction is a purine D-ribonucleoside + phosphate = a purine nucleobase + alpha-D-ribose 1-phosphate. It carries out the reaction a purine 2'-deoxy-D-ribonucleoside + phosphate = a purine nucleobase + 2-deoxy-alpha-D-ribose 1-phosphate. Its function is as follows. Catalyzes the reversible phosphorolytic breakdown of the N-glycosidic bond in the beta-(deoxy)ribonucleoside molecules, with the formation of the corresponding free purine bases and pentose-1-phosphate. This Enterobacter sp. (strain 638) protein is Purine nucleoside phosphorylase DeoD-type.